We begin with the raw amino-acid sequence, 85 residues long: U4-theraphotoxin-Hhn1a (85 aa).

An N-terminal signal peptide occupies residues 1–22 (MKVTLIAILTCAAVLVLHTTAA). Positions 23–48 (EELEAESQPMEVGMPDTELAAVDEER) are excised as a propeptide. Intrachain disulfides connect Cys52-Cys66, Cys56-Cys77, and Cys71-Cys82.

This sequence belongs to the neurotoxin 12 (Hwtx-2) family. 02 (Hwtx-2) subfamily. As to quaternary structure, monomer. As to expression, expressed by the venom gland.

It is found in the secreted. Functionally, neurotoxin active on both insects and mammals. This is U4-theraphotoxin-Hhn1a from Cyriopagopus hainanus (Chinese bird spider).